The following is a 345-amino-acid chain: Solute carrier family 25 member 43 (345 aa).

3 Solcar repeats span residues 11 to 100, 104 to 195, and 199 to 297; these read TSSQ…IDEL, SQWR…QERH, and TSLQ…LYRN. 6 consecutive transmembrane segments (helical) span residues 16 to 36, 67 to 87, 109 to 129, 165 to 185, 204 to 224, and 261 to 281; these read LMCV…LEVV, FWKG…IHLA, IVAG…LEVV, GFSL…AVYI, FING…FETV, and VMAL…YFGL.

The protein belongs to the mitochondrial carrier (TC 2.A.29) family.

It localises to the mitochondrion inner membrane. The chain is Solute carrier family 25 member 43 (slc25a43) from Danio rerio (Zebrafish).